The chain runs to 381 residues: Creatine kinase B-type (381 aa).

The residue at position 4 (S4) is a Phosphoserine. The region spanning 11–98 (KLRFPAEDEF…FDPIIEERHG (88 aa)) is the Phosphagen kinase N-terminal domain. T35 bears the Phosphothreonine mark. A Glycyl lysine isopeptide (Lys-Gly) (interchain with G-Cter in ubiquitin) cross-link involves residue K45. V72 serves as a coordination point for creatine. Basic and acidic residues predominate over residues 96 to 110 (RHGGYQPSDEHKTDL). The disordered stretch occupies residues 96–123 (RHGGYQPSDEHKTDLNPDNLQGGDDLDP). K107 is covalently cross-linked (Glycyl lysine isopeptide (Lys-Gly) (interchain with G-Cter in ubiquitin)). Y125 bears the Phosphotyrosine mark. The Phosphagen kinase C-terminal domain maps to 125–367 (YVLSSRVRTG…KLLIEMEQRL (243 aa)). Residues 128–132 (SSRVR), R130, R132, and H191 each bind ATP. The interval 130-138 (RVRTGRSIR) is internal MTS-like signal. S199 is subject to Phosphoserine. E232 is a creatine binding site. R236 lines the ATP pocket. Residue Y269 is modified to 3'-nitrotyrosine. S285 serves as a coordination point for creatine. R292 provides a ligand contact to ATP. At S309 the chain carries Phosphoserine. Residues R320, 320–325 (RGTGGV), and D335 each bind ATP. Position 322 is a phosphothreonine (T322). Residue K381 forms a Glycyl lysine isopeptide (Lys-Gly) (interchain with G-Cter in ubiquitin) linkage.

This sequence belongs to the ATP:guanido phosphotransferase family. Dimer of identical or non-identical chains, which can be either B (brain type) or M (muscle type). With MM being the major form in skeletal muscle and myocardium, MB existing in myocardium, and BB existing in many tissues, especially brain. Interacts with SLC12A6 (via C-terminus); the interaction may be required for SLC12A6 potassium-chloride cotransport activity. Post-translationally, ubiquitinated by the ECS(ASB9) complex, leading to its degradation by the proteasome. In terms of tissue distribution, expressed in hippocampus and corpus callosum (at protein level).

It is found in the cytoplasm. Its subcellular location is the cytosol. It localises to the mitochondrion. The protein localises to the cell membrane. The enzyme catalyses creatine + ATP = N-phosphocreatine + ADP + H(+). Reversibly catalyzes the transfer of phosphate between ATP and various phosphogens (e.g. creatine phosphate). Creatine kinase isoenzymes play a central role in energy transduction in tissues with large, fluctuating energy demands, such as skeletal muscle, heart, brain and spermatozoa. Acts as a key regulator of adaptive thermogenesis as part of the futile creatine cycle: localizes to the mitochondria of thermogenic fat cells and acts by mediating phosphorylation of creatine to initiate a futile cycle of creatine phosphorylation and dephosphorylation. During the futile creatine cycle, creatine and N-phosphocreatine are in a futile cycle, which dissipates the high energy charge of N-phosphocreatine as heat without performing any mechanical or chemical work. The chain is Creatine kinase B-type from Mus musculus (Mouse).